A 110-amino-acid chain; its full sequence is V-type proton ATPase subunit G 1 (110 aa).

It belongs to the V-ATPase G subunit family. V-ATPase is a heteromultimeric enzyme composed of a peripheral catalytic V1 complex (components A to H) attached to an integral membrane V0 proton pore complex (components: a, c, c', c'' and d).

Its function is as follows. Catalytic subunit of the peripheral V1 complex of vacuolar ATPase (V-ATPase). V-ATPase is responsible for acidifying a variety of intracellular compartments in eukaryotic cells. The polypeptide is V-type proton ATPase subunit G 1 (VATG1) (Nicotiana tabacum (Common tobacco)).